We begin with the raw amino-acid sequence, 246 residues long: Acetoacetate decarboxylase (246 aa).

Residue Lys-116 is the Schiff-base intermediate with acetoacetate of the active site.

This sequence belongs to the ADC family.

It catalyses the reaction acetoacetate + H(+) = acetone + CO2. Catalyzes the conversion of acetoacetate to acetone and carbon dioxide. In Burkholderia vietnamiensis (strain G4 / LMG 22486) (Burkholderia cepacia (strain R1808)), this protein is Acetoacetate decarboxylase.